The sequence spans 223 residues: Putative 3-methyladenine DNA glycosylase (223 aa).

Belongs to the DNA glycosylase MPG family.

In Pseudomonas syringae pv. tomato (strain ATCC BAA-871 / DC3000), this protein is Putative 3-methyladenine DNA glycosylase.